Consider the following 134-residue polypeptide: D-ribose pyranase (134 aa).

H20 serves as the catalytic Proton donor. Substrate-binding positions include D28, H101, and 123–125 (YCN).

It belongs to the RbsD / FucU family. RbsD subfamily. Homodecamer.

The protein localises to the cytoplasm. It catalyses the reaction beta-D-ribopyranose = beta-D-ribofuranose. It participates in carbohydrate metabolism; D-ribose degradation; D-ribose 5-phosphate from beta-D-ribopyranose: step 1/2. Catalyzes the interconversion of beta-pyran and beta-furan forms of D-ribose. The chain is D-ribose pyranase from Pseudomonas fluorescens (strain Pf0-1).